The following is a 204-amino-acid chain: Ribosomal RNA small subunit methyltransferase J (204 aa).

Residues 55–56 (RD), 71–72 (ER), and aspartate 123 each bind S-adenosyl-L-methionine.

It belongs to the methyltransferase superfamily. RsmJ family.

Its subcellular location is the cytoplasm. It carries out the reaction guanosine(1516) in 16S rRNA + S-adenosyl-L-methionine = N(2)-methylguanosine(1516) in 16S rRNA + S-adenosyl-L-homocysteine + H(+). Its function is as follows. Specifically methylates the guanosine in position 1516 of 16S rRNA. This chain is Ribosomal RNA small subunit methyltransferase J, found in Rhodopseudomonas palustris (strain ATCC BAA-98 / CGA009).